Consider the following 222-residue polypeptide: Triosephosphate isomerase (222 aa).

Position 10-12 (10-12) interacts with substrate; that stretch reads NCK. Catalysis depends on His-93, which acts as the Electrophile. The active-site Proton acceptor is Glu-141. Substrate is bound by residues Ile-146, Gly-180, and 201-202; that span reads AS.

Belongs to the triosephosphate isomerase family. Homotetramer; dimer of dimers.

Its subcellular location is the cytoplasm. It carries out the reaction D-glyceraldehyde 3-phosphate = dihydroxyacetone phosphate. It functions in the pathway carbohydrate biosynthesis; gluconeogenesis. The protein operates within carbohydrate degradation; glycolysis; D-glyceraldehyde 3-phosphate from glycerone phosphate: step 1/1. In terms of biological role, involved in the gluconeogenesis. Catalyzes stereospecifically the conversion of dihydroxyacetone phosphate (DHAP) to D-glyceraldehyde-3-phosphate (G3P). The chain is Triosephosphate isomerase from Cenarchaeum symbiosum (strain A).